The sequence spans 236 residues: Biosynthetic peptidoglycan transglycosylase (236 aa).

The helical transmembrane segment at 12-31 threads the bilayer; sequence ALLWFAAGSVLVVLVLRWVP.

The protein belongs to the glycosyltransferase 51 family.

It is found in the cell inner membrane. It carries out the reaction [GlcNAc-(1-&gt;4)-Mur2Ac(oyl-L-Ala-gamma-D-Glu-L-Lys-D-Ala-D-Ala)](n)-di-trans,octa-cis-undecaprenyl diphosphate + beta-D-GlcNAc-(1-&gt;4)-Mur2Ac(oyl-L-Ala-gamma-D-Glu-L-Lys-D-Ala-D-Ala)-di-trans,octa-cis-undecaprenyl diphosphate = [GlcNAc-(1-&gt;4)-Mur2Ac(oyl-L-Ala-gamma-D-Glu-L-Lys-D-Ala-D-Ala)](n+1)-di-trans,octa-cis-undecaprenyl diphosphate + di-trans,octa-cis-undecaprenyl diphosphate + H(+). It functions in the pathway cell wall biogenesis; peptidoglycan biosynthesis. Peptidoglycan polymerase that catalyzes glycan chain elongation from lipid-linked precursors. The chain is Biosynthetic peptidoglycan transglycosylase from Pseudomonas savastanoi pv. phaseolicola (strain 1448A / Race 6) (Pseudomonas syringae pv. phaseolicola (strain 1448A / Race 6)).